Reading from the N-terminus, the 338-residue chain is MQIFYISSPDNQKIYVWKLDNHQEKLELMQVVSTDGCAQPTVVHPNQNFLYVGIRPDFKIDTYRISQNGLLTKIQSTKICDSPTYLTINIYGTFIYCVSYNFNCINVIKIDKFGLLCNSIQIIKNMLGCHSANINKDRKVLWAPCLQENTIRLFDIDHLYGTLKPHNPHVINTNMQSGPRHMAFHSTDNYAYVINEYNGVIDVIQYNDSITNLAIIQKINILSNHGLDTKKFWSSDIHITPNNRWLYCADRFCNTISLFEILLNTKKLKFINYIYTEDQPRGFLIDSTGNFLIVAGQKSHFITLYRIHANNGNLSVISRHASGMGPMWISILSKNTIH.

Belongs to the cycloisomerase 2 family.

It carries out the reaction 6-phospho-D-glucono-1,5-lactone + H2O = 6-phospho-D-gluconate + H(+). It functions in the pathway carbohydrate degradation; pentose phosphate pathway; D-ribulose 5-phosphate from D-glucose 6-phosphate (oxidative stage): step 2/3. Catalyzes the hydrolysis of 6-phosphogluconolactone to 6-phosphogluconate. The sequence is that of 6-phosphogluconolactonase from Blochmanniella floridana.